A 264-amino-acid chain; its full sequence is Hydroxyethylthiazole kinase (264 aa).

Met47 contacts substrate. Residues Arg123 and Ser169 each coordinate ATP. Gly196 is a binding site for substrate.

Belongs to the Thz kinase family. Requires Mg(2+) as cofactor.

It carries out the reaction 5-(2-hydroxyethyl)-4-methylthiazole + ATP = 4-methyl-5-(2-phosphooxyethyl)-thiazole + ADP + H(+). It functions in the pathway cofactor biosynthesis; thiamine diphosphate biosynthesis; 4-methyl-5-(2-phosphoethyl)-thiazole from 5-(2-hydroxyethyl)-4-methylthiazole: step 1/1. In terms of biological role, catalyzes the phosphorylation of the hydroxyl group of 4-methyl-5-beta-hydroxyethylthiazole (THZ). The chain is Hydroxyethylthiazole kinase from Brachyspira hyodysenteriae (strain ATCC 49526 / WA1).